Consider the following 92-residue polypeptide: MEKLAAKVLENFDFLKKLLRDRAECGESEITIYDDPVTIVVKRDRIDFFINEEYHGSVGVGFNTLSDEIREEARLWLEGLAGMKFKRYAVRR.

This is an uncharacterized protein from Archaeoglobus fulgidus (strain ATCC 49558 / DSM 4304 / JCM 9628 / NBRC 100126 / VC-16).